The chain runs to 683 residues: Zinc finger protein 418 (683 aa).

The KRAB domain maps to 48 to 123 (VTIEDVTVYF…TPKQGQLRQK (76 aa)). Polar residues predominate over residues 102–120 (QSLSQTEAPQVRTPKQGQL). Disordered regions lie at residues 102–124 (QSLS…RQKP) and 209–247 (DIPN…QHRL). The span at 225-239 (FHRDKNNSESDEYKK) shows a compositional bias: basic and acidic residues. 14 C2H2-type zinc fingers span residues 287-309 (YECH…QRRH), 315-337 (YKCG…CRVH), 343-365 (FECL…QRTH), 371-393 (YECS…QRTH), 399-421 (YECG…QRVH), 427-449 (YHCE…SKIH), 455-477 (YECG…QRTH), 483-505 (YECR…RRIH), 511-533 (YECE…QRVH), 539-561 (YKCE…QRTH), 567-589 (YECA…QKIH), 595-617 (YHCD…QRVH), 623-645 (YTCG…RRIH), and 651-673 (YECD…QLLH).

This sequence belongs to the krueppel C2H2-type zinc-finger protein family.

Its subcellular location is the nucleus. In terms of biological role, transcriptional repressor. May play a role as regulator of the ubiquitin-proteasome system and autophagy-lysosomal pathway. The chain is Zinc finger protein 418 from Rattus norvegicus (Rat).